The following is a 418-amino-acid chain: Hydroxysteroid dehydrogenase-like protein 2 (418 aa).

NADP(+)-binding positions include 17-23, Lys-42, and Asp-74; that span reads GASRGIG. Lys-42 carries the post-translational modification N6-(2-hydroxyisobutyryl)lysine. N6-acetyllysine is present on Lys-116. Tyr-168 acts as the Proton acceptor in catalysis. Position 172 (Lys-172) interacts with NADP(+). The SCP2 domain occupies 306–415; the sequence is RSGAVEETFR…KLEKLMNQMN (110 aa). Lys-318 carries the post-translational modification N6-succinyllysine.

This sequence belongs to the short-chain dehydrogenases/reductases (SDR) family.

It is found in the peroxisome. Its subcellular location is the mitochondrion. In terms of biological role, has apparently no steroid dehydrogenase activity. Controls bile acid (BA) and lipid metabolism in response to nutritional cues. This Bos taurus (Bovine) protein is Hydroxysteroid dehydrogenase-like protein 2 (HSDL2).